The chain runs to 268 residues: Glucosamine-6-phosphate deaminase (268 aa).

The active-site Proton acceptor; for enolization step is Asp-72. Asp-141 (for ring-opening step) is an active-site residue. His-143 functions as the Proton acceptor; for ring-opening step in the catalytic mechanism. The active-site For ring-opening step is Glu-148.

This sequence belongs to the glucosamine/galactosamine-6-phosphate isomerase family. NagB subfamily. Homohexamer.

It carries out the reaction alpha-D-glucosamine 6-phosphate + H2O = beta-D-fructose 6-phosphate + NH4(+). The protein operates within amino-sugar metabolism; N-acetylneuraminate degradation; D-fructose 6-phosphate from N-acetylneuraminate: step 5/5. Allosterically activated by N-acetylglucosamine 6-phosphate (GlcNAc6P). Functionally, catalyzes the reversible isomerization-deamination of glucosamine 6-phosphate (GlcN6P) to form fructose 6-phosphate (Fru6P) and ammonium ion. This chain is Glucosamine-6-phosphate deaminase, found in Proteus mirabilis (strain HI4320).